Consider the following 344-residue polypeptide: UDP-3-O-acylglucosamine N-acyltransferase (344 aa).

Catalysis depends on His-248, which acts as the Proton acceptor.

The protein belongs to the transferase hexapeptide repeat family. LpxD subfamily. Homotrimer.

It catalyses the reaction a UDP-3-O-[(3R)-3-hydroxyacyl]-alpha-D-glucosamine + a (3R)-hydroxyacyl-[ACP] = a UDP-2-N,3-O-bis[(3R)-3-hydroxyacyl]-alpha-D-glucosamine + holo-[ACP] + H(+). The protein operates within bacterial outer membrane biogenesis; LPS lipid A biosynthesis. Catalyzes the N-acylation of UDP-3-O-acylglucosamine using 3-hydroxyacyl-ACP as the acyl donor. Is involved in the biosynthesis of lipid A, a phosphorylated glycolipid that anchors the lipopolysaccharide to the outer membrane of the cell. This chain is UDP-3-O-acylglucosamine N-acyltransferase, found in Prochlorococcus marinus subsp. pastoris (strain CCMP1986 / NIES-2087 / MED4).